The sequence spans 458 residues: Cell death abnormality protein 8 (458 aa).

The Cytoplasmic portion of the chain corresponds to 1-45 (MFLKKHKSKLLLVPRDEEQEDAGIVAVLTDRIPSVLLVRWFDLFC). A helical membrane pass occupies residues 46-66 (FGFAMCSYALDFFSDIGIAIF). At 67–77 (HFWAGRYLSGS) the chain is on the extracellular side. Residues 78-98 (LVLAFALLPSVIINIISMVWM) traverse the membrane as a helical segment. The Cytoplasmic segment spans residues 99 to 123 (LDDEMHWKRRAHPRRTGTFELNQKR). The helical transmembrane segment at 124–144 (FIPLSKMIVLCICQMGPLFWY) threads the bilayer. At 145-219 (YKALYYGWMF…YYQTGTYPYW (75 aa)) the chain is on the extracellular side. A helical membrane pass occupies residues 220–240 (LYFQAASLLLSIISISWSVVV). The Cytoplasmic segment spans residues 241–274 (QNRSLRMIRDDKVNIWPHEAVLQFCWRFLTILAR). The next 2 helical transmembrane spans lie at 275–295 (IITL…LISV) and 296–316 (HLLV…DACT). Position 317 (histidine 317) is a topological domain, extracellular. The helical transmembrane segment at 318–338 (IEKLLLLINTFIHIFIPFNMV) threads the bilayer. The Cytoplasmic portion of the chain corresponds to 339–353 (EGNTRWRYLTAYSVE). The chain crosses the membrane as a helical span at residues 354–374 (FIEMMLVCWLLPLSLNTFPYI). Residues 375-378 (EKVQ) lie on the Extracellular side of the membrane. Residues 379–399 (VGVPISFIAGIAIMMMYYQFF) form a helical membrane-spanning segment. At 400–458 (HPNRRQLIVTQSQEDLSLNVQKSVETLTPKLESSLEISGEQNTSQDLVSELLLDVEHEN) the chain is on the cytoplasmic side.

This sequence belongs to the XK family. Post-translationally, cleavage by ced-3 activates ced-8 function in promoting phosphatidylserine exposure at the surface of apoptotic cells.

It localises to the cell membrane. The enzyme catalyses a 1,2-diacyl-sn-glycero-3-phospho-L-serine(in) = a 1,2-diacyl-sn-glycero-3-phospho-L-serine(out). In terms of biological role, phospholipid scramblase that acts downstream of ced-9 and caspase ced-3 to promote phosphatidylserine exposure on apoptotic cell surface. Phosphatidylserine is a specific marker only present at the surface of apoptotic cells and acts as a specific signal for engulfment. Regulates apoptosis kinetics during embryonic development. Not required for engulfment of germ cell corpses. The chain is Cell death abnormality protein 8 from Caenorhabditis elegans.